Consider the following 508-residue polypeptide: tRNA-2-methylthio-N(6)-dimethylallyladenosine synthase (508 aa).

One can recognise an MTTase N-terminal domain in the interval 13-131 (KTYEVRTYGC…LPVLLERARV (119 aa)). Cys-22, Cys-60, Cys-94, Cys-168, Cys-172, and Cys-175 together coordinate [4Fe-4S] cluster. The Radical SAM core domain maps to 154–385 (RESAYAAWVS…ALQEEISWDE (232 aa)). The TRAM domain maps to 387–455 (KKQVGRTLEL…PHHLLAEGPV (69 aa)).

Belongs to the methylthiotransferase family. MiaB subfamily. Monomer. [4Fe-4S] cluster serves as cofactor.

Its subcellular location is the cytoplasm. It carries out the reaction N(6)-dimethylallyladenosine(37) in tRNA + (sulfur carrier)-SH + AH2 + 2 S-adenosyl-L-methionine = 2-methylsulfanyl-N(6)-dimethylallyladenosine(37) in tRNA + (sulfur carrier)-H + 5'-deoxyadenosine + L-methionine + A + S-adenosyl-L-homocysteine + 2 H(+). Catalyzes the methylthiolation of N6-(dimethylallyl)adenosine (i(6)A), leading to the formation of 2-methylthio-N6-(dimethylallyl)adenosine (ms(2)i(6)A) at position 37 in tRNAs that read codons beginning with uridine. This Streptomyces avermitilis (strain ATCC 31267 / DSM 46492 / JCM 5070 / NBRC 14893 / NCIMB 12804 / NRRL 8165 / MA-4680) protein is tRNA-2-methylthio-N(6)-dimethylallyladenosine synthase.